A 553-amino-acid polypeptide reads, in one-letter code: CTP synthase (553 aa).

The amidoligase domain stretch occupies residues 1 to 278; it reads MVRRTHGNSQ…DAYVVRELGL (278 aa). Residue serine 25 coordinates CTP. Serine 25 is a UTP binding site. ATP-binding positions include 26-31 and aspartate 83; that span reads SLGKGL. Positions 83 and 152 each coordinate Mg(2+). CTP is bound by residues 159–161, 199–204, and lysine 235; these read DIE and KTKPTQ. Residues 199 to 204 and lysine 235 contribute to the UTP site; that span reads KTKPTQ. The Glutamine amidotransferase type-1 domain maps to 303–552; the sequence is NIAIVGKYID…VKAALDHQAA (250 aa). Glycine 366 contributes to the L-glutamine binding site. Cysteine 393 (nucleophile; for glutamine hydrolysis) is an active-site residue. L-glutamine is bound by residues 394 to 397, glutamate 417, and arginine 478; that span reads LGLQ. Active-site residues include histidine 525 and glutamate 527.

Belongs to the CTP synthase family. As to quaternary structure, homotetramer.

It carries out the reaction UTP + L-glutamine + ATP + H2O = CTP + L-glutamate + ADP + phosphate + 2 H(+). The enzyme catalyses L-glutamine + H2O = L-glutamate + NH4(+). It catalyses the reaction UTP + NH4(+) + ATP = CTP + ADP + phosphate + 2 H(+). Its pathway is pyrimidine metabolism; CTP biosynthesis via de novo pathway; CTP from UDP: step 2/2. With respect to regulation, allosterically activated by GTP, when glutamine is the substrate; GTP has no effect on the reaction when ammonia is the substrate. The allosteric effector GTP functions by stabilizing the protein conformation that binds the tetrahedral intermediate(s) formed during glutamine hydrolysis. Inhibited by the product CTP, via allosteric rather than competitive inhibition. Catalyzes the ATP-dependent amination of UTP to CTP with either L-glutamine or ammonia as the source of nitrogen. Regulates intracellular CTP levels through interactions with the four ribonucleotide triphosphates. The chain is CTP synthase from Bifidobacterium longum (strain NCC 2705).